Consider the following 433-residue polypeptide: MAGQTIIVSGLNPAAILQSTIGGGASPTAAAAAENGTRKVIPLSRDALQDFMLSIITQKLQDEKQPFYVLDLGEVVSLMDQWKSALPNIRPFYAVKCNPEPSFLSILSAMGSNFDCASRAEIEYVLALGISPDRIVFANPCKPESDIIFAAKVGVNLTTYDSEDEVYKIRKHHPKSELLLRIKPMFDGNARCPMGPKYGALPEEVEPLLRAAQAARLTVSGVSFHIGSGDADSNAYLGAIAAAKEVFETAAKLGMSKMTVLDVGGGFTSGHQFTAAAVAVKSALKQRFDDEPELTIIAEPGRFFAETAFTLATTIIGKRVRGELREYWINDGLYGSMNCVLYDHATVNATPLAVQSNRSNVTCGGSKTFPTTVFGPTCDALDTVLRDYQLPELQVNDWLVFPNMGAYTKAAGSNFNGFNTSAIVTHLAYAYPS.

Residue K96 is modified to N6-(pyridoxal phosphate)lysine. Residues S228, G266, and 299 to 302 contribute to the pyridoxal 5'-phosphate site; that span reads EPGR. 342–343 contributes to the substrate binding site; that stretch reads YD. C378 acts as the Proton donor; shared with dimeric partner in catalysis. A substrate-binding site is contributed by D379. Y407 is a binding site for pyridoxal 5'-phosphate.

It belongs to the Orn/Lys/Arg decarboxylase class-II family. Homodimer. Only the dimer is catalytically active, as the active sites are constructed of residues from both monomers. Pyridoxal 5'-phosphate serves as cofactor.

Its subcellular location is the plastid. It localises to the chloroplast. It catalyses the reaction L-ornithine + H(+) = putrescine + CO2. It participates in alkaloid biosynthesis; nicotine biosynthesis. The protein operates within amine and polyamine biosynthesis; putrescine biosynthesis via L-ornithine pathway; putrescine from L-ornithine: step 1/1. Functionally, involved in the biosynthesis of pyridine alkaloid natural products, leading mainly to the production of anabasine, anatabine, nicotine and nornicotine, effective deterrents against herbivores with antiparasitic and pesticide properties (neurotoxins); nornicotine serves as the precursor in the synthesis of the carcinogen compound N'-nitrosonornicotine (NNN). Catalyzes the first and rate-limiting step of polyamine biosynthesis that converts ornithine into putrescine, which is the precursor for the polyamines, spermidine and spermine. Polyamines are essential for cell proliferation and are implicated in cellular processes, ranging from DNA replication to apoptosis. In Nicotiana glauca (Glaucous tobacco), this protein is Ornithine decarboxylase, chloroplastic.